We begin with the raw amino-acid sequence, 251 residues long: Cell division protein ZapD (251 aa).

This sequence belongs to the ZapD family. As to quaternary structure, interacts with FtsZ.

The protein localises to the cytoplasm. Cell division factor that enhances FtsZ-ring assembly. Directly interacts with FtsZ and promotes bundling of FtsZ protofilaments, with a reduction in FtsZ GTPase activity. This is Cell division protein ZapD from Paraburkholderia phytofirmans (strain DSM 17436 / LMG 22146 / PsJN) (Burkholderia phytofirmans).